Consider the following 258-residue polypeptide: Imidazole glycerol phosphate synthase subunit HisF (258 aa).

Active-site residues include aspartate 11 and aspartate 130.

Belongs to the HisA/HisF family. Heterodimer of HisH and HisF.

The protein resides in the cytoplasm. The catalysed reaction is 5-[(5-phospho-1-deoxy-D-ribulos-1-ylimino)methylamino]-1-(5-phospho-beta-D-ribosyl)imidazole-4-carboxamide + L-glutamine = D-erythro-1-(imidazol-4-yl)glycerol 3-phosphate + 5-amino-1-(5-phospho-beta-D-ribosyl)imidazole-4-carboxamide + L-glutamate + H(+). Its pathway is amino-acid biosynthesis; L-histidine biosynthesis; L-histidine from 5-phospho-alpha-D-ribose 1-diphosphate: step 5/9. Functionally, IGPS catalyzes the conversion of PRFAR and glutamine to IGP, AICAR and glutamate. The HisF subunit catalyzes the cyclization activity that produces IGP and AICAR from PRFAR using the ammonia provided by the HisH subunit. The sequence is that of Imidazole glycerol phosphate synthase subunit HisF from Yersinia pestis (strain Pestoides F).